The primary structure comprises 366 residues: Ribosomal RNA large subunit methyltransferase M (366 aa).

S-adenosyl-L-methionine contacts are provided by residues Ser188, 221-224 (CPGG), Asp240, Asp260, and Asp277. Residue Lys306 is the Proton acceptor of the active site.

This sequence belongs to the class I-like SAM-binding methyltransferase superfamily. RNA methyltransferase RlmE family. RlmM subfamily. As to quaternary structure, monomer.

The protein resides in the cytoplasm. The enzyme catalyses cytidine(2498) in 23S rRNA + S-adenosyl-L-methionine = 2'-O-methylcytidine(2498) in 23S rRNA + S-adenosyl-L-homocysteine + H(+). Its function is as follows. Catalyzes the 2'-O-methylation at nucleotide C2498 in 23S rRNA. The sequence is that of Ribosomal RNA large subunit methyltransferase M from Photorhabdus asymbiotica subsp. asymbiotica (strain ATCC 43949 / 3105-77) (Xenorhabdus luminescens (strain 2)).